Reading from the N-terminus, the 196-residue chain is Dephospho-CoA kinase (196 aa).

One can recognise a DPCK domain in the interval 6 to 196 (AIALTGGIGT…QVERFLKTLL (191 aa)). Residue 14 to 19 (GTGKST) coordinates ATP.

This sequence belongs to the CoaE family.

It is found in the cytoplasm. The enzyme catalyses 3'-dephospho-CoA + ATP = ADP + CoA + H(+). It functions in the pathway cofactor biosynthesis; coenzyme A biosynthesis; CoA from (R)-pantothenate: step 5/5. In terms of biological role, catalyzes the phosphorylation of the 3'-hydroxyl group of dephosphocoenzyme A to form coenzyme A. This is Dephospho-CoA kinase from Helicobacter pylori (strain ATCC 700392 / 26695) (Campylobacter pylori).